The sequence spans 339 residues: Dihydroorotate dehydrogenase (quinone) (339 aa).

FMN is bound by residues 62–66 and Thr-86; that span reads AGMDK. A substrate-binding site is contributed by Lys-66. 111–115 is a binding site for substrate; sequence NRMGF. Residues Asn-139 and Asn-172 each contribute to the FMN site. Asn-172 provides a ligand contact to substrate. Residue Ser-175 is the Nucleophile of the active site. Asn-177 is a substrate binding site. FMN contacts are provided by Lys-217 and Thr-245. 246-247 lines the substrate pocket; sequence NT. Residues Gly-268, Gly-297, and 318–319 each bind FMN; that span reads YS.

It belongs to the dihydroorotate dehydrogenase family. Type 2 subfamily. Monomer. The cofactor is FMN.

It localises to the cell membrane. It carries out the reaction (S)-dihydroorotate + a quinone = orotate + a quinol. It functions in the pathway pyrimidine metabolism; UMP biosynthesis via de novo pathway; orotate from (S)-dihydroorotate (quinone route): step 1/1. Its function is as follows. Catalyzes the conversion of dihydroorotate to orotate with quinone as electron acceptor. This Shewanella oneidensis (strain ATCC 700550 / JCM 31522 / CIP 106686 / LMG 19005 / NCIMB 14063 / MR-1) protein is Dihydroorotate dehydrogenase (quinone).